A 494-amino-acid chain; its full sequence is ATP synthase subunit beta, chloroplastic (494 aa).

172-179 is a binding site for ATP; that stretch reads GGAGVGKT.

It belongs to the ATPase alpha/beta chains family. In terms of assembly, F-type ATPases have 2 components, CF(1) - the catalytic core - and CF(0) - the membrane proton channel. CF(1) has five subunits: alpha(3), beta(3), gamma(1), delta(1), epsilon(1). CF(0) has four main subunits: a(1), b(1), b'(1) and c(9-12).

The protein resides in the plastid. It localises to the chloroplast thylakoid membrane. The enzyme catalyses ATP + H2O + 4 H(+)(in) = ADP + phosphate + 5 H(+)(out). Functionally, produces ATP from ADP in the presence of a proton gradient across the membrane. The catalytic sites are hosted primarily by the beta subunits. The polypeptide is ATP synthase subunit beta, chloroplastic (Physcomitrium patens (Spreading-leaved earth moss)).